Here is a 68-residue protein sequence, read N- to C-terminus: Ribosome modulation factor (68 aa).

Belongs to the ribosome modulation factor family.

It localises to the cytoplasm. During stationary phase, converts 70S ribosomes to an inactive dimeric form (100S ribosomes). The chain is Ribosome modulation factor from Alcanivorax borkumensis (strain ATCC 700651 / DSM 11573 / NCIMB 13689 / SK2).